The following is a 247-amino-acid chain: Protein LIFEGUARD 4 (247 aa).

A run of 7 helical transmembrane segments spans residues 42–62 (VYSI…TVVF), 75–95 (AGLA…CPLY), 105–125 (YLLL…TCAF), 130–150 (VILE…VYTF), 165–185 (FLFG…FFPL), 188–208 (ISVM…IVYD), and 222–242 (IWAA…LLTI).

This sequence belongs to the BI1 family.

It is found in the membrane. The chain is Protein LIFEGUARD 4 from Arabidopsis thaliana (Mouse-ear cress).